A 145-amino-acid polypeptide reads, in one-letter code: Fatty acid-binding protein homolog 4 (145 aa).

Belongs to the calycin superfamily. Fatty-acid binding protein (FABP) family.

This Caenorhabditis elegans protein is Fatty acid-binding protein homolog 4 (lbp-4).